A 337-amino-acid chain; its full sequence is Anthranilate phosphoribosyltransferase (337 aa).

5-phospho-alpha-D-ribose 1-diphosphate contacts are provided by residues Gly-81, Gly-84–Asp-85, Ser-89, Asn-91–Thr-94, Lys-109–Ser-117, and Ala-121. An anthranilate-binding site is contributed by Gly-81. Ser-93 is a binding site for Mg(2+). Asn-112 is an anthranilate binding site. Arg-167 contacts anthranilate. Mg(2+) contacts are provided by Asp-226 and Glu-227.

Belongs to the anthranilate phosphoribosyltransferase family. Homodimer. It depends on Mg(2+) as a cofactor.

The enzyme catalyses N-(5-phospho-beta-D-ribosyl)anthranilate + diphosphate = 5-phospho-alpha-D-ribose 1-diphosphate + anthranilate. The protein operates within amino-acid biosynthesis; L-tryptophan biosynthesis; L-tryptophan from chorismate: step 2/5. In terms of biological role, catalyzes the transfer of the phosphoribosyl group of 5-phosphorylribose-1-pyrophosphate (PRPP) to anthranilate to yield N-(5'-phosphoribosyl)-anthranilate (PRA). The chain is Anthranilate phosphoribosyltransferase from Methylobacterium sp. (strain 4-46).